Consider the following 287-residue polypeptide: Octanoyl-[GcvH]:protein N-octanoyltransferase (287 aa).

A BPL/LPL catalytic domain is found at 45-253 (GESPATARSW…ELKELSGRLY (209 aa)). Cysteine 150 (acyl-thioester intermediate) is an active-site residue.

Belongs to the octanoyltransferase LipL family.

It catalyses the reaction N(6)-octanoyl-L-lysyl-[glycine-cleavage complex H protein] + L-lysyl-[lipoyl-carrier protein] = N(6)-octanoyl-L-lysyl-[lipoyl-carrier protein] + L-lysyl-[glycine-cleavage complex H protein]. Its pathway is protein modification; protein lipoylation via endogenous pathway; protein N(6)-(lipoyl)lysine from octanoyl-[acyl-carrier-protein]. Its function is as follows. Catalyzes the amidotransfer (transamidation) of the octanoyl moiety from octanoyl-GcvH to the lipoyl domain of the E2 subunit of lipoate-dependent enzymes. The chain is Octanoyl-[GcvH]:protein N-octanoyltransferase from Bacillus velezensis (strain DSM 23117 / BGSC 10A6 / LMG 26770 / FZB42) (Bacillus amyloliquefaciens subsp. plantarum).